A 213-amino-acid chain; its full sequence is ATP-dependent Clp protease proteolytic subunit (213 aa).

Serine 114 functions as the Nucleophile in the catalytic mechanism. The active site involves histidine 139.

This sequence belongs to the peptidase S14 family. As to quaternary structure, fourteen ClpP subunits assemble into 2 heptameric rings which stack back to back to give a disk-like structure with a central cavity, resembling the structure of eukaryotic proteasomes.

The protein resides in the cytoplasm. The catalysed reaction is Hydrolysis of proteins to small peptides in the presence of ATP and magnesium. alpha-casein is the usual test substrate. In the absence of ATP, only oligopeptides shorter than five residues are hydrolyzed (such as succinyl-Leu-Tyr-|-NHMec, and Leu-Tyr-Leu-|-Tyr-Trp, in which cleavage of the -Tyr-|-Leu- and -Tyr-|-Trp bonds also occurs).. In terms of biological role, cleaves peptides in various proteins in a process that requires ATP hydrolysis. Has a chymotrypsin-like activity. Plays a major role in the degradation of misfolded proteins. The protein is ATP-dependent Clp protease proteolytic subunit of Pseudomonas putida (strain GB-1).